The chain runs to 423 residues: Gamma-glutamyl phosphate reductase 2 (423 aa).

The protein belongs to the gamma-glutamyl phosphate reductase family.

The protein localises to the cytoplasm. The catalysed reaction is L-glutamate 5-semialdehyde + phosphate + NADP(+) = L-glutamyl 5-phosphate + NADPH + H(+). Its pathway is amino-acid biosynthesis; L-proline biosynthesis; L-glutamate 5-semialdehyde from L-glutamate: step 2/2. Functionally, catalyzes the NADPH-dependent reduction of L-glutamate 5-phosphate into L-glutamate 5-semialdehyde and phosphate. The product spontaneously undergoes cyclization to form 1-pyrroline-5-carboxylate. The polypeptide is Gamma-glutamyl phosphate reductase 2 (Bacillus licheniformis (strain ATCC 14580 / DSM 13 / JCM 2505 / CCUG 7422 / NBRC 12200 / NCIMB 9375 / NCTC 10341 / NRRL NRS-1264 / Gibson 46)).